The chain runs to 256 residues: Thiazole synthase (256 aa).

K95 serves as the catalytic Schiff-base intermediate with DXP. Residues G156, 182–183 (AG), and 204–205 (NT) contribute to the 1-deoxy-D-xylulose 5-phosphate site.

It belongs to the ThiG family. In terms of assembly, homotetramer. Forms heterodimers with either ThiH or ThiS.

It localises to the cytoplasm. The enzyme catalyses [ThiS sulfur-carrier protein]-C-terminal-Gly-aminoethanethioate + 2-iminoacetate + 1-deoxy-D-xylulose 5-phosphate = [ThiS sulfur-carrier protein]-C-terminal Gly-Gly + 2-[(2R,5Z)-2-carboxy-4-methylthiazol-5(2H)-ylidene]ethyl phosphate + 2 H2O + H(+). It participates in cofactor biosynthesis; thiamine diphosphate biosynthesis. Its function is as follows. Catalyzes the rearrangement of 1-deoxy-D-xylulose 5-phosphate (DXP) to produce the thiazole phosphate moiety of thiamine. Sulfur is provided by the thiocarboxylate moiety of the carrier protein ThiS. In vitro, sulfur can be provided by H(2)S. The polypeptide is Thiazole synthase (Escherichia coli O6:H1 (strain CFT073 / ATCC 700928 / UPEC)).